Here is a 197-residue protein sequence, read N- to C-terminus: MDSEFFQPVYPRHYGECLSPVSTPSFFSTHMYTILIAIVVLVIIIIVLIYLFSSRKKKAAAAIEEEDIQFINPYQDQQWVEVTPQPGTSKPAGATTASVGKPVTGRPATNRPVTDRPATNNPVTDRLVMATGGPAAVSAAASAAASAAASAAASAPAHPAEPYTTVTTQNTASQTMSAIENLRQRSTYTHKDLENSL.

The chain crosses the membrane as a helical span at residues 32-52 (YTILIAIVVLVIIIIVLIYLF). The disordered stretch occupies residues 84–123 (PQPGTSKPAGATTASVGKPVTGRPATNRPVTDRPATNNPV). A run of 4 repeats spans residues 139–142 (AAAS), 143–146 (AAAS), 147–150 (AAAS), and 151–154 (AAAS). The segment at 139-154 (AAASAAASAAASAAAS) is 4 X 4 AA tandem repeats of A-A-A-S. The interaction with host DYNLL1 stretch occupies residues 163 to 175 (YTTVTTQNTASQT).

This sequence belongs to the asfivirus envelope protein p54 family. As to quaternary structure, interacts with the host light chain cytoplasmic dynein DYNLL1; this interaction is critical for intracellular microtubule-dependent virus transport toward viral factories.

The protein resides in the virion membrane. Its subcellular location is the host cytoplasm. The protein localises to the host cytoskeleton. It is found in the host endoplasmic reticulum membrane. Functionally, inner envelope protein involved, through its interaction with host dynein, in the intracellular microtubule-dependent transport of viral capsid toward viral factories. Seems to induce caspase-3 activation and apoptosis. Plays a role in virion morphogenesis by recruiting and transforming the host ER membranes into the precursors of the viral envelope. Involved in virus attachment to the host cell. The chain is Inner membrane protein p54 from African swine fever virus (isolate Tick/South Africa/Pretoriuskop Pr4/1996) (ASFV).